A 261-amino-acid chain; its full sequence is Glucosamine-6-phosphate deaminase (261 aa).

The active-site Proton acceptor; for enolization step is the aspartate 67. The For ring-opening step role is filled by aspartate 136. Histidine 138 (proton acceptor; for ring-opening step) is an active-site residue. Glutamate 143 (for ring-opening step) is an active-site residue.

This sequence belongs to the glucosamine/galactosamine-6-phosphate isomerase family. NagB subfamily.

The enzyme catalyses alpha-D-glucosamine 6-phosphate + H2O = beta-D-fructose 6-phosphate + NH4(+). Its pathway is amino-sugar metabolism; N-acetylneuraminate degradation; D-fructose 6-phosphate from N-acetylneuraminate: step 5/5. Catalyzes the reversible isomerization-deamination of glucosamine 6-phosphate (GlcN6P) to form fructose 6-phosphate (Fru6P) and ammonium ion. The protein is Glucosamine-6-phosphate deaminase of Streptomyces coelicolor (strain ATCC BAA-471 / A3(2) / M145).